The primary structure comprises 173 residues: Translation initiation factor IF-3 (173 aa).

Belongs to the IF-3 family. In terms of assembly, monomer.

It is found in the cytoplasm. Its function is as follows. IF-3 binds to the 30S ribosomal subunit and shifts the equilibrium between 70S ribosomes and their 50S and 30S subunits in favor of the free subunits, thus enhancing the availability of 30S subunits on which protein synthesis initiation begins. The protein is Translation initiation factor IF-3 of Phenylobacterium zucineum (strain HLK1).